Consider the following 107-residue polypeptide: Replication initiation control protein YabA (107 aa).

Residues H81, C83, C97, and C100 each coordinate Zn(2+).

This sequence belongs to the YabA family. In terms of assembly, homotetramer. Interacts with both DnaA and DnaN, acting as a bridge between these two proteins. Zn(2+) is required as a cofactor.

The protein resides in the cytoplasm. It localises to the nucleoid. In terms of biological role, involved in control of chromosome replication initiation. Inhibits the cooperative binding of DnaA to the oriC region, thus negatively regulating initiation of chromosome replication. Inhibits the ability of DnaA-ATP to form a helix on DNA; does not disassemble preformed DnaA-DNA helices. Decreases the residence time of DnaA on the chromosome at its binding sites (oriC, replication forks and promoter-binding sites). Tethers DnaA to the replication machinery via the DNA polymerase beta sliding clamp subunit (dnaN). Associates with oriC and other DnaA targets on the chromosome in a DnaA-dependent manner. The sequence is that of Replication initiation control protein YabA from Streptococcus pyogenes serotype M3 (strain ATCC BAA-595 / MGAS315).